Here is a 373-residue protein sequence, read N- to C-terminus: Homoserine O-acetyltransferase (373 aa).

The region spanning 46-355 (NAILICHPLT…NPNGHDSFLL (310 aa)) is the AB hydrolase-1 domain. Ser-151 (nucleophile) is an active-site residue. Arg-221 contacts substrate. Residues Asp-317 and His-350 contribute to the active site. Residue Asp-351 coordinates substrate.

This sequence belongs to the AB hydrolase superfamily. MetX family. Homodimer.

The protein localises to the cytoplasm. It carries out the reaction L-homoserine + acetyl-CoA = O-acetyl-L-homoserine + CoA. It functions in the pathway amino-acid biosynthesis; L-methionine biosynthesis via de novo pathway; O-acetyl-L-homoserine from L-homoserine: step 1/1. Functionally, transfers an acetyl group from acetyl-CoA to L-homoserine, forming acetyl-L-homoserine. The chain is Homoserine O-acetyltransferase from Zymomonas mobilis subsp. mobilis (strain ATCC 31821 / ZM4 / CP4).